Reading from the N-terminus, the 417-residue chain is NADH-quinone oxidoreductase subunit D (417 aa).

The protein belongs to the complex I 49 kDa subunit family. NDH-1 is composed of 14 different subunits. Subunits NuoB, C, D, E, F, and G constitute the peripheral sector of the complex.

Its subcellular location is the cell inner membrane. The catalysed reaction is a quinone + NADH + 5 H(+)(in) = a quinol + NAD(+) + 4 H(+)(out). NDH-1 shuttles electrons from NADH, via FMN and iron-sulfur (Fe-S) centers, to quinones in the respiratory chain. The immediate electron acceptor for the enzyme in this species is believed to be ubiquinone. Couples the redox reaction to proton translocation (for every two electrons transferred, four hydrogen ions are translocated across the cytoplasmic membrane), and thus conserves the redox energy in a proton gradient. The protein is NADH-quinone oxidoreductase subunit D of Paraburkholderia xenovorans (strain LB400).